Reading from the N-terminus, the 512-residue chain is Probable ubiquitin carboxyl-terminal hydrolase 3 (512 aa).

Positions 64–109 are disordered; that stretch reads TSKTKESEKSPKSWSAIAKKHVQGDSPVKKSHSVPVPSDRSEKKSF. Positions 133–511 constitute a USP domain; it reads RGFINTGNIC…VAYLLFYTRR (379 aa). C142 (nucleophile) is an active-site residue. H453 acts as the Proton acceptor in catalysis.

The protein belongs to the peptidase C19 family.

It carries out the reaction Thiol-dependent hydrolysis of ester, thioester, amide, peptide and isopeptide bonds formed by the C-terminal Gly of ubiquitin (a 76-residue protein attached to proteins as an intracellular targeting signal).. This Schizosaccharomyces pombe (strain 972 / ATCC 24843) (Fission yeast) protein is Probable ubiquitin carboxyl-terminal hydrolase 3 (ubp3).